Consider the following 37-residue polypeptide: MKIRASVRKICEKCRLIRRRGRVMVICSNPRHKQRQG.

The protein belongs to the bacterial ribosomal protein bL36 family.

The protein localises to the plastid. It localises to the chloroplast. The polypeptide is Large ribosomal subunit protein bL36c (Cycas taitungensis (Prince sago)).